The following is a 259-amino-acid chain: 5'-nucleotidase SurE (259 aa).

Residues aspartate 8, aspartate 9, serine 40, and asparagine 95 each contribute to the a divalent metal cation site.

It belongs to the SurE nucleotidase family. A divalent metal cation is required as a cofactor.

The protein resides in the cytoplasm. It carries out the reaction a ribonucleoside 5'-phosphate + H2O = a ribonucleoside + phosphate. Nucleotidase that shows phosphatase activity on nucleoside 5'-monophosphates. The sequence is that of 5'-nucleotidase SurE from Oleidesulfovibrio alaskensis (strain ATCC BAA-1058 / DSM 17464 / G20) (Desulfovibrio alaskensis).